The primary structure comprises 89 residues: Small ribosomal subunit protein uS17 (89 aa).

The protein belongs to the universal ribosomal protein uS17 family. In terms of assembly, part of the 30S ribosomal subunit.

One of the primary rRNA binding proteins, it binds specifically to the 5'-end of 16S ribosomal RNA. The polypeptide is Small ribosomal subunit protein uS17 (Lactiplantibacillus plantarum (strain ATCC BAA-793 / NCIMB 8826 / WCFS1) (Lactobacillus plantarum)).